The primary structure comprises 481 residues: uncharacterized protein (481 aa).

The segment at 1-28 (MPQSNHYSHQSRSHNDRRRQQPDEKVQA) is disordered. Residues 29-87 (TVNIGQRFPLTIRRLGINGEGIGYYKHVITFVKGALPEEVVVAEVTAVHPRYLEAKIRS) form the TRAM domain. Residues Gln313, Tyr342, Asp363, and Asp411 each coordinate S-adenosyl-L-methionine. Cys438 (nucleophile) is an active-site residue.

Belongs to the class I-like SAM-binding methyltransferase superfamily. RNA M5U methyltransferase family.

This is an uncharacterized protein from Lactiplantibacillus plantarum (strain ATCC BAA-793 / NCIMB 8826 / WCFS1) (Lactobacillus plantarum).